The following is a 154-amino-acid chain: Ribosomal RNA large subunit methyltransferase H (154 aa).

Residue glycine 102 participates in S-adenosyl-L-methionine binding.

This sequence belongs to the RNA methyltransferase RlmH family. Homodimer.

It localises to the cytoplasm. The enzyme catalyses pseudouridine(1915) in 23S rRNA + S-adenosyl-L-methionine = N(3)-methylpseudouridine(1915) in 23S rRNA + S-adenosyl-L-homocysteine + H(+). Its function is as follows. Specifically methylates the pseudouridine at position 1915 (m3Psi1915) in 23S rRNA. The protein is Ribosomal RNA large subunit methyltransferase H of Phenylobacterium zucineum (strain HLK1).